Here is a 438-residue protein sequence, read N- to C-terminus: Phosphoribosylamine--glycine ligase (438 aa).

An ATP-grasp domain is found at 107–319 (RKLFEDYDIP…LAKISKQIVD (213 aa)). ATP is bound at residue 134-197 (IDNFDEPVVV…EELLLGEEYT (64 aa)). Mg(2+)-binding residues include Q277, E289, and N291. 3 residues coordinate Mn(2+): Q277, E289, and N291.

Belongs to the GARS family. Mg(2+) is required as a cofactor. Mn(2+) serves as cofactor.

The enzyme catalyses 5-phospho-beta-D-ribosylamine + glycine + ATP = N(1)-(5-phospho-beta-D-ribosyl)glycinamide + ADP + phosphate + H(+). It functions in the pathway purine metabolism; IMP biosynthesis via de novo pathway; N(1)-(5-phospho-D-ribosyl)glycinamide from 5-phospho-alpha-D-ribose 1-diphosphate: step 2/2. This is Phosphoribosylamine--glycine ligase from Methanosphaera stadtmanae (strain ATCC 43021 / DSM 3091 / JCM 11832 / MCB-3).